The primary structure comprises 469 residues: Protein translocase subunit SecY (469 aa).

Topologically, residues 1-20 (MSFIDSLATLGQYLPAVTKP) are cytoplasmic. Residues 21 to 47 (KEKPSLGQKLVWSLVAVIIYLIMASTP) form a helical membrane-spanning segment. Residues 48–59 (LYGITSASFFKN) are Extracellular-facing. Residues 60-67 (LILEQIIF) constitute an intramembrane region (helical). The discontinuously helical transmembrane segment at 60-88 (LILEQIIFASTTGTLAQLGIGPIITAGLI) threads the bilayer. The stretch at 68 to 79 (ASTTGTLAQLGI) is an intramembrane region. The segment at residues 80 to 88 (GPIITAGLI) is an intramembrane region (helical). At 89-109 (MQILAGSKLISIDLNDPDDRV) the chain is on the cytoplasmic side. A helical transmembrane segment spans residues 110–131 (KFTEAQKGLAFIFILVESALFG). Over 132–146 (YVLARTSTTINASIL) the chain is Extracellular. The chain crosses the membrane as a helical span at residues 147–171 (FIAGIVIAQLIVATYLILLLDELIQ). The Cytoplasmic segment spans residues 172-178 (KGWGLGS). Residues 179–197 (GVSLFILAGVMKIMFWDMF) form a helical membrane-spanning segment. Residues 198–240 (GIASVSSQNLPIGFFPALFTALASHSDVLNLIVNTSTKNLFQP) lie on the Extracellular side of the membrane. A helical transmembrane segment spans residues 241–262 (DLVGLVTTIALIIITIYLTTMT). Residues 263 to 287 (IEIPVTSQKLRGIRRTIPLNFLYVS) lie on the Cytoplasmic side of the membrane. Residues 288–309 (SIPVIFVAVLGSDIQLFASLAS) form a helical membrane-spanning segment. Residues 310–347 (YVSPSASNILNTVSGVFFFPPPNSAIPHSIYAVVLDPL) are Extracellular-facing. Residues 348–367 (GALEYAVVFIVLSILFGILW) traverse the membrane as a helical segment. The Cytoplasmic portion of the chain corresponds to 368–410 (VDVAGLDPATQAQQLVEAGIEIPGVRNNPKIIEGILARYIYPL). The helical transmembrane segment at 411-429 (AFFSSIIVGLIAVFATLLG) threads the bilayer. The Extracellular portion of the chain corresponds to 430–432 (AYG). Residues 433 to 447 (TGIGILLAVTIAIQY) form a helical membrane-spanning segment. Topologically, residues 448–469 (YSLLAYERSLEMYPLLKRLIGE) are cytoplasmic.

Belongs to the SecY/SEC61-alpha family. As to quaternary structure, component of the Sec protein translocase complex. Heterotrimer consisting of alpha (SecY), beta (SecG) and gamma (SecE) subunits. The heterotrimers can form oligomers, although 1 heterotrimer is thought to be able to translocate proteins. Interacts with the ribosome. May interact with SecDF, and other proteins may be involved.

It is found in the cell membrane. Its function is as follows. The central subunit of the protein translocation channel SecYEG. Consists of two halves formed by TMs 1-5 and 6-10. These two domains form a lateral gate at the front which open onto the bilayer between TMs 2 and 7, and are clamped together by SecE at the back. The channel is closed by both a pore ring composed of hydrophobic SecY resides and a short helix (helix 2A) on the extracellular side of the membrane which forms a plug. The plug probably moves laterally to allow the channel to open. The ring and the pore may move independently. This chain is Protein translocase subunit SecY, found in Saccharolobus solfataricus (strain ATCC 35092 / DSM 1617 / JCM 11322 / P2) (Sulfolobus solfataricus).